A 240-amino-acid chain; its full sequence is 2-C-methyl-D-erythritol 2,4-cyclodiphosphate synthase, apicoplast (240 aa).

2 residues coordinate a divalent metal cation: Asp71 and His73. 4-CDP-2-C-methyl-D-erythritol 2-phosphate-binding positions include 71-73 and 115-116; these read DIH and HS. His123 provides a ligand contact to a divalent metal cation. 4-CDP-2-C-methyl-D-erythritol 2-phosphate is bound by residues 137 to 139, 142 to 146, 181 to 187, and 212 to 214; these read DIG, FPDKD, AQVPKIS, and GKT.

It belongs to the IspF family. In terms of assembly, homotrimer. It depends on a divalent metal cation as a cofactor.

The protein resides in the plastid. Its subcellular location is the apicoplast. It catalyses the reaction 4-CDP-2-C-methyl-D-erythritol 2-phosphate = 2-C-methyl-D-erythritol 2,4-cyclic diphosphate + CMP. Its pathway is isoprenoid biosynthesis; isopentenyl diphosphate biosynthesis via DXP pathway; isopentenyl diphosphate from 1-deoxy-D-xylulose 5-phosphate: step 4/6. In the mevalonate-independent isoprenoid biosynthetic pathway, converts 4-diphosphocytidyl-2C-methyl-D-erythritol 2-phosphate into 2C-methyl-D-erythritol 2,4-cyclodiphosphate and CMP. The protein is 2-C-methyl-D-erythritol 2,4-cyclodiphosphate synthase, apicoplast of Plasmodium falciparum (isolate 3D7).